The primary structure comprises 971 residues: Dynamin-like GTPase OPA1, mitochondrial (971 aa).

A mitochondrion-targeting transit peptide spans 1-89 (MLRVGRAVAC…GGWRYQQHRS (89 aa)). Topologically, residues 90–98 (FWMLRLASR) are mitochondrial matrix. Residues 99–115 (LLKLRYIVLGSAVGGGY) form a helical membrane-spanning segment. Residues 116–781 (TAKKTYEEWK…SVINDMVGPD (666 aa)) are Mitochondrial intermembrane-facing. The tract at residues 204-224 (EAPVTATPEASDKQFKKSSDK) is disordered. Residues 213 to 224 (ASDKQFKKSSDK) show a composition bias toward basic and acidic residues. A coiled-coil region spans residues 219–265 (KKSSDKEKVDQLQEELLRTQMKYQRMLERLEKENKDLRKVVLQKDEK). In terms of domain architecture, Dynamin-type G spans 297-572 (QDHLPRVVVV…FWKMVRESVE (276 aa)). The interval 307-314 (GDQSAGKT) is G1 motif. Residues serine 310, glycine 312, lysine 313, threonine 314, serine 315, and glycine 329 each contribute to the GTP site. Position 314 (threonine 314) interacts with Mg(2+). Positions 333 to 336 (MMTR) are G2 motif. Residues threonine 335 and aspartate 410 each coordinate Mg(2+). The interval 410–413 (DLPG) is G3 motif. The G4 motif stretch occupies residues 478-481 (TKVD). GTP-binding residues include lysine 479, aspartate 481, and threonine 514. Positions 512–515 (VVTG) are G5 motif. Stalk region regions lie at residues 600–847 (DRNE…IKDT) and 885–939 (CNDV…VHLI). The paddle region stretch occupies residues 747-867 (TDKPQWDAAI…QKALQHCNLC (121 aa)). An intramembrane segment occupies 782 to 792 (WKQRWMSWKNR). Residues 793 to 971 (SPEQHTRNET…AFIEALHKEK (179 aa)) lie on the Mitochondrial intermembrane side of the membrane. Cysteine 867 and cysteine 885 are disulfide-bonded. The stretch at 906 to 971 (RQQLTNTEVR…AFIEALHKEK (66 aa)) forms a coiled coil.

The protein belongs to the TRAFAC class dynamin-like GTPase superfamily. Dynamin/Fzo/YdjA family. In terms of assembly, oligomeric complex consisting of membrane-bound and soluble forms of OPA1. In terms of processing, cleaved by OMA1 or YME1L downstream of the transmembrane region in response to different signals to generate soluble forms. Cleaved by OMA1 at position S1 following stress conditions, generating the short soluble form (Dynamin-like GTPase OPA1, short form; S-OPA1). As to expression, strongly expressed in the brain, ovary and skeletal muscle. In the brain, expression of the mRNA was observed specifically in motor neurons, in nucleus oculomotorius, in nucleus valvulae lateralis, in the medulla oblongata and in the spinal cord.

The protein resides in the mitochondrion inner membrane. It is found in the mitochondrion intermembrane space. The enzyme catalyses GTP + H2O = GDP + phosphate + H(+). Dynamin-related GTPase that is essential for normal mitochondrial morphology by mediating fusion of the mitochondrial inner membranes, regulating cristae morphology and maintaining respiratory chain function. Exists in two forms: the transmembrane, long form (Dynamin-like GTPase OPA1, long form; L-OPA1), which is tethered to the inner mitochondrial membrane, and the short soluble form (Dynamin-like GTPase OPA1, short form; S-OPA1), which results from proteolytic cleavage and localizes in the intermembrane space. Both forms (L-OPA1 and S-OPA1) cooperate to catalyze the fusion of the mitochondrial inner membrane. The equilibrium between L-OPA1 and S-OPA1 is essential: excess levels of S-OPA1, produced by cleavage by OMA1 following loss of mitochondrial membrane potential, lead to an impaired equilibrium between L-OPA1 and S-OPA1, inhibiting mitochondrial fusion. The balance between L-OPA1 and S-OPA1 also influences cristae shape and morphology. Its role in mitochondrial morphology is required for mitochondrial genome maintenance. Its function is as follows. Constitutes the transmembrane long form (L-OPA1) that plays a central role in mitochondrial inner membrane fusion and cristae morphology. L-OPA1 and the soluble short form (S-OPA1) form higher-order helical assemblies that coordinate the fusion of mitochondrial inner membranes. Inner membrane-anchored L-OPA1 molecules initiate membrane remodeling by recruiting soluble S-OPA1 to rapidly polymerize into a flexible cylindrical scaffold encaging the mitochondrial inner membrane. Once at the membrane surface, the formation of S-OPA1 helices induce bilayer curvature. OPA1 dimerization through the paddle region, which inserts into cardiolipin-containing membrane, promotes GTP hydrolysis and the helical assembly of a flexible OPA1 lattice on the membrane, which drives membrane curvature and mitochondrial fusion. Plays a role in the maintenance and remodeling of mitochondrial cristae, some invaginations of the mitochondrial inner membrane that provide an increase in the surface area. Probably acts by forming helical filaments at the inside of inner membrane tubes with the shape and dimensions of crista junctions. Functionally, constitutes the soluble short form (S-OPA1) generated by cleavage by OMA1, which plays a central role in mitochondrial inner membrane fusion and cristae morphology. The transmembrane long form (L-OPA1) and the S-OPA1 form higher-order helical assemblies that coordinate the fusion of mitochondrial inner membranes. Inner membrane-anchored L-OPA1 molecules initiate membrane remodeling by recruiting soluble S-OPA1 to rapidly polymerize into a flexible cylindrical scaffold encaging the mitochondrial inner membrane. Once at the membrane surface, the formation of S-OPA1 helices induce bilayer curvature. OPA1 dimerization through the paddle region, which inserts into cardiolipin-containing membrane, promotes GTP hydrolysis and the helical assembly of a flexible OPA1 lattice on the membrane, which drives membrane curvature and mitochondrial fusion. Excess levels of S-OPA1 produced by cleavage by OMA1 following stress conditions that induce loss of mitochondrial membrane potential, lead to an impaired equilibrium between L-OPA1 and S-OPA1, thereby inhibiting mitochondrial fusion. Plays a role in the maintenance and remodeling of mitochondrial cristae, some invaginations of the mitochondrial inner membrane that provide an increase in the surface area. Probably acts by forming helical filaments at the inside of inner membrane tubes with the shape and dimensions of crista junctions. The chain is Dynamin-like GTPase OPA1, mitochondrial (opa1) from Oncorhynchus masou (Cherry salmon).